Consider the following 501-residue polypeptide: Aspartate--tRNA ligase, cytoplasmic (501 aa).

Threonine 52 is subject to Phosphothreonine. Lysine 74 carries the N6-acetyllysine modification. Glutamate 229 contacts L-aspartate. Serine 249 carries the post-translational modification Phosphoserine. An aspartate region spans residues 251–254; the sequence is QLYK. L-aspartate is bound at residue arginine 273. Residues 273 to 275 and 281 to 283 contribute to the ATP site; these read RAE and RHL. At lysine 374 the chain carries N6-acetyllysine. Position 424 (glutamate 424) interacts with ATP. L-aspartate is bound by residues serine 427 and arginine 431. Residue 472 to 475 participates in ATP binding; the sequence is GLER.

It belongs to the class-II aminoacyl-tRNA synthetase family. Type 2 subfamily. In terms of assembly, homodimer. Part of a multisubunit complex that groups tRNA ligases for Arg (RARS1), Asp (DARS1), Gln (QARS1), Ile (IARS1), Leu (LARS1), Lys (KARS1), Met (MARS1) the bifunctional ligase for Glu and Pro (EPRS1) and the auxiliary subunits AIMP1/p43, AIMP2/p38 and EEF1E1/p18.

It is found in the cytoplasm. The catalysed reaction is tRNA(Asp) + L-aspartate + ATP = L-aspartyl-tRNA(Asp) + AMP + diphosphate. Its function is as follows. Catalyzes the specific attachment of an amino acid to its cognate tRNA in a 2 step reaction: the amino acid (AA) is first activated by ATP to form AA-AMP and then transferred to the acceptor end of the tRNA. The chain is Aspartate--tRNA ligase, cytoplasmic (Dars1) from Mus musculus (Mouse).